The primary structure comprises 269 residues: SF-assemblin (269 aa).

The segment at 1–23 is disordered; sequence MSISPGRSFSPMRASGLTGITSA. The interval 1–24 is nonhelical region; it reads MSISPGRSFSPMRASGLTGITSAG. The tract at residues 25 to 269 is rod; sequence PTAKLEHVSE…LQEGLKLVST (245 aa). Residues 98–144 adopt a coiled-coil conformation; the sequence is AERSAAQHVDMQNSLKQAVDSLSNRLQDLHSLVREEREQRRNDIEHL.

Belongs to the SF-assemblin family.

It localises to the cytoplasm. It is found in the cytoskeleton. Its function is as follows. Major component of the striated microtubule-associated fibers (SMAFs; system-I-fibers). The protein is SF-assemblin of Chlamydomonas moewusii (Chlamydomonas eugametos).